Reading from the N-terminus, the 548-residue chain is MSSGETFRPTADFHPSLWRNHFLKGASDFKTVDHTATQERHEALKEEVRRMITDAEDKPVQKLRLIDEVQRLGVAYHFEKEIEDAIQKLCPIYIDSNRADLHTVSLHFRLLRQQGIKISCDVFEKFKDDEGRFKSSLINDVQGMLSLYEAAYMAVRGEHILDEAIAFTTTHLKSLVAQDHVTPKLAEQINHALYRPLRKTLPRLEARYFMSMINSTSDHLYNKTLLNFAKLDFNILLELHKEELNELTKWWKDLDFTTKLPYARDRLVELYFWDLGTYFEPQYAFGRKIMTQLNYILSIIDDTYDAYGTLEELSLFTEAVQRWNIEAVDMLPEYMKLIYRTLLDAFNEIEEDMAKQGRSHCVRYAKEENQKVIGAYSVQAKWFSEGYVPTIEEYMPIALTSCAYTFVITNSFLGMGDFATKEVFEWISNNPKVVKAASVICRLMDDMQGHEFEQKRGHVASAIECYTKQHGVSKEEAIKMFEEEVANAWKDINEELMMKPTVVARPLLGTILNLARAIDFIYKEDDGYTHSYLIKDQIASVLGDHVPF.

Mg(2+)-binding residues include Asp301, Asp305, Asp445, and Glu453. Residues 301-305 carry the DDXXD motif motif; that stretch reads DDTYD.

This sequence belongs to the terpene synthase family. Tpsa subfamily. It depends on Mg(2+) as a cofactor. Mn(2+) is required as a cofactor.

It carries out the reaction (2E,6E)-farnesyl diphosphate = (+)-valencene + diphosphate. Its pathway is secondary metabolite biosynthesis; terpenoid biosynthesis. In terms of biological role, sesquiterpene synthase involved in the biosynthesis of volatile compounds which contribute to fruit flavor and aroma. Mediates the conversion of (2E,6E)-farnesyl diphosphate (FPP) into (+)-valencene. No activity detected with geranyl diphosphate (GPP). The sequence is that of Terpene synthase 1 from Citrus sinensis (Sweet orange).